The chain runs to 209 residues: Lipid A acyltransferase PagP (209 aa).

An N-terminal signal peptide occupies residues 1 to 24 (MHLKRALITLSLITLPIIPFSSYA). Catalysis depends on residues histidine 81, aspartate 124, and serine 125.

It belongs to the lipid A palmitoyltransferase family. Homodimer.

Its subcellular location is the cell outer membrane. It carries out the reaction a lipid A + a 1,2-diacyl-sn-glycero-3-phosphocholine = a hepta-acyl lipid A + a 2-acyl-sn-glycero-3-phosphocholine. It catalyses the reaction a lipid IVA + a 1,2-diacyl-sn-glycero-3-phosphocholine = a lipid IVB + a 2-acyl-sn-glycero-3-phosphocholine. The enzyme catalyses a lipid IIA + a 1,2-diacyl-sn-glycero-3-phosphocholine = a lipid IIB + a 2-acyl-sn-glycero-3-phosphocholine. Transfers a fatty acid residue from the sn-1 position of a phospholipid to the N-linked hydroxyfatty acid chain on the proximal unit of lipid A or its precursors. In Pectobacterium parmentieri (strain WPP163) (Pectobacterium wasabiae (strain WPP163)), this protein is Lipid A acyltransferase PagP.